The sequence spans 224 residues: Large ribosomal subunit protein uL1 (224 aa).

The protein belongs to the universal ribosomal protein uL1 family. As to quaternary structure, part of the 50S ribosomal subunit.

In terms of biological role, binds directly to 23S rRNA. The L1 stalk is quite mobile in the ribosome, and is involved in E site tRNA release. Protein L1 is also a translational repressor protein, it controls the translation of the L11 operon by binding to its mRNA. The chain is Large ribosomal subunit protein uL1 from Borrelia hermsii (strain HS1 / DAH).